Consider the following 269-residue polypeptide: Probable cysteine protease avirulence protein AvrPpiC2 (269 aa).

Positions methionine 1 to arginine 39 are disordered. The segment covering serine 13–asparagine 27 has biased composition (polar residues). Active-site residues include cysteine 72, histidine 213, and aspartate 230.

Belongs to the peptidase C58 family.

In terms of biological role, potential cysteine protease. Avirulence protein, which may be essential during infection of plant cells from Pea and some Arabidopsis thaliana cultivars. May act by affecting the plant defense system. In plants lacking appropriate resistance (R) gene, it probably impairs the plant defense system and leads to the bacteria multiplication. In contrast, in plants containing the appropriate R protein, it is unable to induce disease symptoms, explaining its avirulence name. This chain is Probable cysteine protease avirulence protein AvrPpiC2 (avrPpiC2), found in Pseudomonas syringae pv. pisi.